Consider the following 629-residue polypeptide: Translation initiation factor IF-2 (629 aa).

Residues 1-20 form a disordered region; that stretch reads MAKNIKTNKKPQQVNKKEMS. One can recognise a tr-type G domain in the interval 127 to 297; the sequence is HRAPIVTIMG…LLIAEMQDYK (171 aa). Residues 136 to 143 form a G1 region; that stretch reads GHVDHGKT. 136 to 143 serves as a coordination point for GTP; that stretch reads GHVDHGKT. Residues 161–165 are G2; the sequence is GITQA. A G3 region spans residues 183-186; the sequence is DTPG. Residues 183–187 and 237–240 each bind GTP; these read DTPGH and NKCD. The G4 stretch occupies residues 237–240; it reads NKCD. The G5 stretch occupies residues 273–275; it reads SAK.

It belongs to the TRAFAC class translation factor GTPase superfamily. Classic translation factor GTPase family. IF-2 subfamily.

The protein localises to the cytoplasm. Functionally, one of the essential components for the initiation of protein synthesis. Protects formylmethionyl-tRNA from spontaneous hydrolysis and promotes its binding to the 30S ribosomal subunits. Also involved in the hydrolysis of GTP during the formation of the 70S ribosomal complex. The protein is Translation initiation factor IF-2 of Mesoplasma florum (strain ATCC 33453 / NBRC 100688 / NCTC 11704 / L1) (Acholeplasma florum).